The sequence spans 282 residues: Acetyl-coenzyme A carboxylase carboxyl transferase subunit beta (282 aa).

The region spanning 25-282 is the CoA carboxyltransferase N-terminal domain; the sequence is LWTKCVSCGE…SSILTMLYRP (258 aa). Positions 29, 32, 48, and 51 each coordinate Zn(2+). Residues 29–51 form a C4-type zinc finger; sequence CVSCGETIYTKDIENNLNVCPKC.

The protein belongs to the AccD/PCCB family. Acetyl-CoA carboxylase is a heterohexamer composed of biotin carboxyl carrier protein (AccB), biotin carboxylase (AccC) and two subunits each of ACCase subunit alpha (AccA) and ACCase subunit beta (AccD). The cofactor is Zn(2+).

It is found in the cytoplasm. It catalyses the reaction N(6)-carboxybiotinyl-L-lysyl-[protein] + acetyl-CoA = N(6)-biotinyl-L-lysyl-[protein] + malonyl-CoA. The protein operates within lipid metabolism; malonyl-CoA biosynthesis; malonyl-CoA from acetyl-CoA: step 1/1. Functionally, component of the acetyl coenzyme A carboxylase (ACC) complex. Biotin carboxylase (BC) catalyzes the carboxylation of biotin on its carrier protein (BCCP) and then the CO(2) group is transferred by the transcarboxylase to acetyl-CoA to form malonyl-CoA. This chain is Acetyl-coenzyme A carboxylase carboxyl transferase subunit beta, found in Citrifermentans bemidjiense (strain ATCC BAA-1014 / DSM 16622 / JCM 12645 / Bem) (Geobacter bemidjiensis).